We begin with the raw amino-acid sequence, 31 residues long: Cyclotide mech-6 (31 aa).

A cross-link (cyclopeptide (Gly-Asn)) is located at residues 1–31 (GVIPCGESCVFIPCISSVVGCTCKNKVCYRN). Intrachain disulfides connect cysteine 5–cysteine 21, cysteine 9–cysteine 23, and cysteine 14–cysteine 28.

In terms of processing, this is a cyclic peptide. Contains 3 disulfide bonds.

In terms of biological role, probably participates in a plant defense mechanism (Potential). Binds to and induces leakage in phospholipd membranes, particularly ones containing 1-palmitoyl-2-oleophosphatidylethanolamine (POPE). This chain is Cyclotide mech-6, found in Melicytus chathamicus (Chatham Island mahoe).